The primary structure comprises 412 residues: Serine hydroxymethyltransferase (412 aa).

Residues L117 and 121 to 123 (GHL) each bind (6S)-5,6,7,8-tetrahydrofolate. K226 is subject to N6-(pyridoxal phosphate)lysine.

The protein belongs to the SHMT family. Homodimer. Requires pyridoxal 5'-phosphate as cofactor.

It localises to the cytoplasm. It carries out the reaction (6R)-5,10-methylene-5,6,7,8-tetrahydrofolate + glycine + H2O = (6S)-5,6,7,8-tetrahydrofolate + L-serine. The protein operates within one-carbon metabolism; tetrahydrofolate interconversion. Its pathway is amino-acid biosynthesis; glycine biosynthesis; glycine from L-serine: step 1/1. In terms of biological role, catalyzes the reversible interconversion of serine and glycine with tetrahydrofolate (THF) serving as the one-carbon carrier. This reaction serves as the major source of one-carbon groups required for the biosynthesis of purines, thymidylate, methionine, and other important biomolecules. Also exhibits THF-independent aldolase activity toward beta-hydroxyamino acids, producing glycine and aldehydes, via a retro-aldol mechanism. The protein is Serine hydroxymethyltransferase of Staphylococcus aureus (strain USA300).